Consider the following 319-residue polypeptide: Histidinol-phosphate aminotransferase 1 (319 aa).

An N6-(pyridoxal phosphate)lysine modification is found at lysine 182.

It belongs to the class-II pyridoxal-phosphate-dependent aminotransferase family. Histidinol-phosphate aminotransferase subfamily. Pyridoxal 5'-phosphate serves as cofactor.

It catalyses the reaction L-histidinol phosphate + 2-oxoglutarate = 3-(imidazol-4-yl)-2-oxopropyl phosphate + L-glutamate. Its pathway is amino-acid biosynthesis; L-histidine biosynthesis; L-histidine from 5-phospho-alpha-D-ribose 1-diphosphate: step 7/9. This Archaeoglobus fulgidus (strain ATCC 49558 / DSM 4304 / JCM 9628 / NBRC 100126 / VC-16) protein is Histidinol-phosphate aminotransferase 1 (hisC1).